Here is a 310-residue protein sequence, read N- to C-terminus: ADP-L-glycero-D-manno-heptose-6-epimerase (310 aa).

Residues 10–11 (FI), 31–32 (DN), Lys-38, Lys-53, 75–79 (EGACS), and Asn-92 contribute to the NADP(+) site. The Proton acceptor role is filled by Tyr-140. Lys-144 is a binding site for NADP(+). Residue Asn-169 participates in substrate binding. Residues Val-170 and Lys-178 each coordinate NADP(+). The active-site Proton acceptor is the Lys-178. Substrate contacts are provided by residues Ser-180, His-187, 201 to 204 (FEGS), Arg-209, and Tyr-272.

This sequence belongs to the NAD(P)-dependent epimerase/dehydratase family. HldD subfamily. Homopentamer. Requires NADP(+) as cofactor.

The catalysed reaction is ADP-D-glycero-beta-D-manno-heptose = ADP-L-glycero-beta-D-manno-heptose. Its pathway is nucleotide-sugar biosynthesis; ADP-L-glycero-beta-D-manno-heptose biosynthesis; ADP-L-glycero-beta-D-manno-heptose from D-glycero-beta-D-manno-heptose 7-phosphate: step 4/4. Functionally, catalyzes the interconversion between ADP-D-glycero-beta-D-manno-heptose and ADP-L-glycero-beta-D-manno-heptose via an epimerization at carbon 6 of the heptose. This Salmonella newport (strain SL254) protein is ADP-L-glycero-D-manno-heptose-6-epimerase.